A 140-amino-acid chain; its full sequence is UPF0102 protein alr1796 (140 aa).

It belongs to the UPF0102 family.

In Nostoc sp. (strain PCC 7120 / SAG 25.82 / UTEX 2576), this protein is UPF0102 protein alr1796.